The following is a 594-amino-acid chain: Protein wntless (594 aa).

Over 1 to 13 (MSGTILENLSGRK) the chain is Cytoplasmic. A helical transmembrane segment spans residues 14–34 (LSILVATLLLCQVLCFLLGGL). Residues 35-239 (YAPLPAGHVT…AIHQNGGFTQ (205 aa)) lie on the Lumenal side of the membrane. An N-linked (GlcNAc...) asparagine glycan is attached at asparagine 58. A helical transmembrane segment spans residues 240-260 (IWLLLKTMLFPFVVGIMIWFW). Residues 261–270 (RRVHLLQRSP) are Cytoplasmic-facing. A helical transmembrane segment spans residues 271–291 (ALLEYMLIYLGAALTFLNLPL). The Lumenal segment spans residues 292–311 (EYLSLVYEMPYMLLLSDIRQ). Residues 312–332 (GIFYAMLLTFWLVFAGEHMLI) form a helical membrane-spanning segment. At 333–344 (QDAPNKSTIRSR) the chain is on the cytoplasmic side. The helical transmembrane segment at 345-365 (YWKHLSAVVVGCISLFVFDIC) threads the bilayer. At 366-390 (ERGVQLRNPFYSIWTTPLGAKVAMT) the chain is on the lumenal side. Residues 391 to 411 (FIVLAGVSAAIYFLFLCYMIW) form a helical membrane-spanning segment. Topologically, residues 412 to 473 (KVFRNIGDKR…ANESKGLIYR (62 aa)) are cytoplasmic. Residues 474–494 (FKFLMLATLVCAALTVAGFIM) form a helical membrane-spanning segment. At 495–514 (GQMAEGQWDWNDNVAIQPTS) the chain is on the lumenal side. Residues 515-535 (AFLTGVYGMWNIYIFALLILY) form a helical membrane-spanning segment. The Cytoplasmic segment spans residues 536-594 (APSHKQWPTMHHSDETTQSNENIVASAASEEIEFSHLPSDSNPSEISSLTSFTRKVAFD). The interval 571-594 (HLPSDSNPSEISSLTSFTRKVAFD) is disordered. A compositionally biased stretch (polar residues) spans 573 to 588 (PSDSNPSEISSLTSFT).

Belongs to the wntless family. Interacts with wg; in the Golgi. Interacts with Vps35, a component of the retromer complex; wls stability is regulated by Vps35. Ubiquitously expressed in the wing imaginal disk, increased expression is observed in a stripe at the dorso-ventral boundary and other regions of the wing disk that express wg. Also expresses in the leg imaginal disk. During larval development, expression is seen in both motorneurons and muscle.

The protein resides in the presynaptic cell membrane. It localises to the postsynaptic cell membrane. Its subcellular location is the cell membrane. The protein localises to the endosome membrane. It is found in the endoplasmic reticulum membrane. The protein resides in the golgi apparatus membrane. Its function is as follows. A segment polarity gene required for wingless (wg)-dependent patterning processes, acting in both wg-sending cells and wg-target cells. In non-neuronal cells wls directs wg secretion. The wls traffic loop encompasses the Golgi, the cell surface, an endocytic compartment and a retrograde route leading back to the Golgi, and involves clathrin-mediated endocytosis and the retromer complex (a conserved protein complex consisting of Vps35 and Vps26). In neuronal cells (the larval motorneuron NMJ), the wg signal moves across the synapse via the release of wls-containing exosome-like vesicles. Postsynaptic wls is required for the trafficking of fz2 through the fz2-interacting protein Grip. The chain is Protein wntless from Drosophila melanogaster (Fruit fly).